The following is a 235-amino-acid chain: Pyridoxine 5'-phosphate synthase (235 aa).

Asn-6 lines the 3-amino-2-oxopropyl phosphate pocket. 8–9 serves as a coordination point for 1-deoxy-D-xylulose 5-phosphate; that stretch reads DH. Residue Arg-17 coordinates 3-amino-2-oxopropyl phosphate. The Proton acceptor role is filled by His-42. 2 residues coordinate 1-deoxy-D-xylulose 5-phosphate: Arg-44 and His-49. Glu-69 serves as the catalytic Proton acceptor. Residue Thr-99 coordinates 1-deoxy-D-xylulose 5-phosphate. The Proton donor role is filled by His-189. 3-amino-2-oxopropyl phosphate is bound by residues Gly-190 and 211–212; that span reads GH.

The protein belongs to the PNP synthase family. As to quaternary structure, homooctamer; tetramer of dimers.

Its subcellular location is the cytoplasm. It catalyses the reaction 3-amino-2-oxopropyl phosphate + 1-deoxy-D-xylulose 5-phosphate = pyridoxine 5'-phosphate + phosphate + 2 H2O + H(+). It participates in cofactor biosynthesis; pyridoxine 5'-phosphate biosynthesis; pyridoxine 5'-phosphate from D-erythrose 4-phosphate: step 5/5. Functionally, catalyzes the complicated ring closure reaction between the two acyclic compounds 1-deoxy-D-xylulose-5-phosphate (DXP) and 3-amino-2-oxopropyl phosphate (1-amino-acetone-3-phosphate or AAP) to form pyridoxine 5'-phosphate (PNP) and inorganic phosphate. The protein is Pyridoxine 5'-phosphate synthase of Chlorobium chlorochromatii (strain CaD3).